The sequence spans 642 residues: Threonine--tRNA ligase (642 aa).

A TGS domain is found at 1–61; it reads MPIITLPDGS…EHDASLEIIT (61 aa). The segment at 244–535 is catalytic; sequence DHRKIGKQLD…LIEEYAGFFP (292 aa). Residues cysteine 335, histidine 386, and histidine 512 each contribute to the Zn(2+) site.

Belongs to the class-II aminoacyl-tRNA synthetase family. Homodimer. Zn(2+) serves as cofactor.

It is found in the cytoplasm. It catalyses the reaction tRNA(Thr) + L-threonine + ATP = L-threonyl-tRNA(Thr) + AMP + diphosphate + H(+). Functionally, catalyzes the attachment of threonine to tRNA(Thr) in a two-step reaction: L-threonine is first activated by ATP to form Thr-AMP and then transferred to the acceptor end of tRNA(Thr). Also edits incorrectly charged L-seryl-tRNA(Thr). This is Threonine--tRNA ligase from Vibrio cholerae serotype O1 (strain ATCC 39541 / Classical Ogawa 395 / O395).